Here is a 112-residue protein sequence, read N- to C-terminus: Osmotically-inducible putative lipoprotein OsmE (112 aa).

Residues Met1 to Gly20 form the signal peptide. Cys21 carries the N-palmitoyl cysteine lipid modification. A lipid anchor (S-diacylglycerol cysteine) is attached at Cys21.

Its subcellular location is the cell inner membrane. This is Osmotically-inducible putative lipoprotein OsmE (osmE) from Escherichia coli O157:H7.